We begin with the raw amino-acid sequence, 673 residues long: MGPSRSFQNLLLLLLPLALALCSAAASGEASRRFWVENDTFWKDGAPFQIVGGDVHYFRIVPEYWKDRLLRAKALGLNTIQTYVPWNLHEPKPLSWEFKGFTDIESYLRLAHELDMLVMLRVGPYICGEWDLGGFPPWLLTIEPTIELRSSDSTYLSLVDRWWGVLLPKIAPLLYSNGGPIIMVQIENEFGSFGDDKNYLHYLVEVARRYLGNDIMLYTTDGGAIGNLKNGTILQDDVFAAVDFDTGSNPWPIFQLQKEYNLPGKSAPLSSEFYTGWLTHWGERIATTDASSTAKALKRILCRNGSAVLYMAHGGTNFGFYNGANTGQNESDYKADLTSYDYDAPIREYGDVHNAKYKALRRVIHECTGIPLLQLPSKIERASYGLVEVQKVASLFDVIHNISDALKVAFSEQPLSMELMGQMFGFLLYTSEYQEKHSSSILSIPKVHDRAQVFVSCSHGDVRKPRYVGIVERWSSKTLQIPSLSCSSNVSLYILVENMGRVNYGPYIFDQKGILSSVEIDGIILRHWKMHPVSLNAVGNLSKLQLIMQMTDAEASKVSIYGDSENKLQDVSLYLNEGISEEPAFYEGHFHIDSESEKKDTFISFRGWNKGVAFVNNFNIGRFWPAIGPQCALYVPAPILKPGDNVIVIFELHSPNPELTIKLVKDPDFTCGQ.

The signal sequence occupies residues 1-20 (MGPSRSFQNLLLLLLPLALA). Asn-38 carries an N-linked (GlcNAc...) asparagine glycan. Glu-189 serves as the catalytic Proton donor. Asn-230 is a glycosylation site (N-linked (GlcNAc...) asparagine). The active-site Nucleophile is the Glu-272. 5 N-linked (GlcNAc...) asparagine glycosylation sites follow: Asn-304, Asn-329, Asn-401, Asn-489, and Asn-540.

Belongs to the glycosyl hydrolase 35 family.

The protein resides in the secreted. Its subcellular location is the extracellular space. It localises to the apoplast. It catalyses the reaction Hydrolysis of terminal non-reducing beta-D-galactose residues in beta-D-galactosides.. This Oryza sativa subsp. japonica (Rice) protein is Beta-galactosidase 8.